A 1333-amino-acid polypeptide reads, in one-letter code: DNA-directed RNA polymerase subunit beta' (1333 aa).

Residues Cys-60, Cys-62, Cys-75, and Cys-78 each contribute to the Zn(2+) site. The Mg(2+) site is built by Asp-535, Asp-537, and Asp-539. Residues Cys-901, Cys-983, Cys-990, and Cys-993 each contribute to the Zn(2+) site.

It belongs to the RNA polymerase beta' chain family. As to quaternary structure, the RNAP catalytic core consists of 2 alpha, 1 beta, 1 beta' and 1 omega subunit. When a sigma factor is associated with the core the holoenzyme is formed, which can initiate transcription. Requires Mg(2+) as cofactor. Zn(2+) serves as cofactor.

The enzyme catalyses RNA(n) + a ribonucleoside 5'-triphosphate = RNA(n+1) + diphosphate. DNA-dependent RNA polymerase catalyzes the transcription of DNA into RNA using the four ribonucleoside triphosphates as substrates. In Corynebacterium glutamicum (strain R), this protein is DNA-directed RNA polymerase subunit beta'.